A 110-amino-acid polypeptide reads, in one-letter code: Putative membrane protein insertion efficiency factor (110 aa).

This sequence belongs to the UPF0161 family.

The protein resides in the cell inner membrane. Its function is as follows. Could be involved in insertion of integral membrane proteins into the membrane. The sequence is that of Putative membrane protein insertion efficiency factor from Campylobacter hominis (strain ATCC BAA-381 / DSM 21671 / CCUG 45161 / LMG 19568 / NCTC 13146 / CH001A).